The following is a 110-amino-acid chain: Serum amyloid A protein (110 aa).

The segment at 73-110 (GGSGRGAEDSRADQAANEWGRSGKDPNHFRPHGLPDKY) is disordered. Basic and acidic residues predominate over residues 93–110 (RSGKDPNHFRPHGLPDKY).

The protein belongs to the SAA family. Post-translationally, this protein is the precursor of amyloid protein A, which is formed by the removal of residues from the C-terminal end. As to expression, expressed by the liver; secreted in plasma.

In terms of biological role, major acute phase reactant. Apolipoprotein of the HDL complex. This is Serum amyloid A protein (SAA1) from Equus caballus (Horse).